Here is a 619-residue protein sequence, read N- to C-terminus: Very-long-chain aldehyde decarbonylase GL1-4 (619 aa).

5 helical membrane-spanning segments follow: residues 45–65 (IAFS…QIWI), 94–114 (GWDD…LAMP), 126–146 (GAVV…YWFH), 178–198 (FAEH…TIYL), and 325–345 (AWYM…AWIY). The 135-residue stretch at 138–272 (VEFLYYWFHR…MPFYDYIYNT (135 aa)) folds into the Fatty acid hydroxylase domain.

The protein belongs to the sterol desaturase family. In terms of assembly, homodimer.

It is found in the endoplasmic reticulum membrane. It carries out the reaction a long-chain fatty aldehyde + 2 NADPH + O2 + H(+) = a long-chain alkane + formate + 2 NADP(+) + H2O. In terms of biological role, aldehyde decarbonylase involved in the conversion of aldehydes to alkanes. Core component of a very-long-chain alkane synthesis complex. This chain is Very-long-chain aldehyde decarbonylase GL1-4, found in Oryza sativa subsp. indica (Rice).